Consider the following 92-residue polypeptide: Progonadoliberin-1 (92 aa).

The N-terminal stretch at 1 to 23 (MELVPKFLAGLILLTLCVGGCYA) is a signal peptide. Pyrrolidone carboxylic acid is present on Gln-24. The residue at position 33 (Gly-33) is a Glycine amide.

The protein belongs to the GnRH family.

Its subcellular location is the secreted. Functionally, stimulates the secretion of gonadotropins; it stimulates the secretion of both luteinizing and follicle-stimulating hormones. In Tupaia belangeri (Common tree shrew), this protein is Progonadoliberin-1 (GNRH1).